The sequence spans 242 residues: B-box zinc finger protein 20 (242 aa).

Zn(2+)-binding residues include cysteine 5, cysteine 8, cysteine 28, histidine 33, cysteine 58, cysteine 61, cysteine 81, and histidine 91. The segment at 5-47 adopts a B box-type 1; atypical zinc-finger fold; that stretch reads CAVCDKEEASVFCCADEAALCNGCDRHVHFANKLAGKHLRFSL. The B box-type 2; atypical zinc finger occupies 58-100; the sequence is CDICGERRALLFCQEDRAILCRECDIPIHQANEHTKKHNRFLL. The interval 112–153 is disordered; sequence YPRASNSNSAAAFGRAKTRPKSVSSEVPSSASNEVFTSSSST. Residues 133 to 153 show a composition bias toward low complexity; the sequence is SVSSEVPSSASNEVFTSSSST.

In terms of assembly, interacts with MED25 and COP1. In terms of processing, COP1-mediated ubiquitination and subsequent proteasomal degradation of BBX20 occurs in the dark.

It localises to the nucleus. In terms of biological role, acts as a positive regulator of seedling photomorphogenesis. Plays a negative role in brassinosteroid responses. The sequence is that of B-box zinc finger protein 20 from Arabidopsis thaliana (Mouse-ear cress).